Reading from the N-terminus, the 353-residue chain is Photosystem II protein D1 (353 aa).

Residue Thr2 is modified to N-acetylthreonine. A Phosphothreonine modification is found at Thr2. Transmembrane regions (helical) follow at residues Tyr29–Ser46, His118–Leu133, and Trp142–Ala156. His118 serves as a coordination point for chlorophyll a. Tyr126 contributes to the pheophytin a binding site. [CaMn4O5] cluster is bound by residues Asp170 and Glu189. A helical transmembrane segment spans residues Phe197 to Leu218. His198 contacts chlorophyll a. A quinone contacts are provided by residues His215 and Ser264 to Phe265. Residue His215 participates in Fe cation binding. Residue His272 participates in Fe cation binding. The helical transmembrane segment at Phe274–Leu288 threads the bilayer. [CaMn4O5] cluster contacts are provided by His332, Glu333, Asp342, and Ala344. Residues Ala345–Gly353 constitute a propeptide that is removed on maturation.

Belongs to the reaction center PufL/M/PsbA/D family. PSII is composed of 1 copy each of membrane proteins PsbA, PsbB, PsbC, PsbD, PsbE, PsbF, PsbH, PsbI, PsbJ, PsbK, PsbL, PsbM, PsbT, PsbX, PsbY, PsbZ, Psb30/Ycf12, at least 3 peripheral proteins of the oxygen-evolving complex and a large number of cofactors. It forms dimeric complexes. It depends on The D1/D2 heterodimer binds P680, chlorophylls that are the primary electron donor of PSII, and subsequent electron acceptors. It shares a non-heme iron and each subunit binds pheophytin, quinone, additional chlorophylls, carotenoids and lipids. D1 provides most of the ligands for the Mn4-Ca-O5 cluster of the oxygen-evolving complex (OEC). There is also a Cl(-1) ion associated with D1 and D2, which is required for oxygen evolution. The PSII complex binds additional chlorophylls, carotenoids and specific lipids. as a cofactor. In terms of processing, tyr-161 forms a radical intermediate that is referred to as redox-active TyrZ, YZ or Y-Z. Post-translationally, C-terminally processed by CTPA; processing is essential to allow assembly of the oxygen-evolving complex and thus photosynthetic growth.

Its subcellular location is the plastid. It localises to the chloroplast thylakoid membrane. It catalyses the reaction 2 a plastoquinone + 4 hnu + 2 H2O = 2 a plastoquinol + O2. Photosystem II (PSII) is a light-driven water:plastoquinone oxidoreductase that uses light energy to abstract electrons from H(2)O, generating O(2) and a proton gradient subsequently used for ATP formation. It consists of a core antenna complex that captures photons, and an electron transfer chain that converts photonic excitation into a charge separation. The D1/D2 (PsbA/PsbD) reaction center heterodimer binds P680, the primary electron donor of PSII as well as several subsequent electron acceptors. This Coffea arabica (Arabian coffee) protein is Photosystem II protein D1.